Reading from the N-terminus, the 353-residue chain is Neutral protease 2 homolog AO090001000135 (353 aa).

The N-terminal stretch at 1-19 (MRFISVSSLLLALAPALNA) is a signal peptide. A propeptide spanning residues 20–176 (VPVEVAGSAQ…TQAVKILERR (157 aa)) is cleaved from the precursor. 2 disulfides stabilise this stretch: Cys-182-Cys-254 and Cys-261-Cys-279. His-304 contributes to the Zn(2+) binding site. Glu-305 is a catalytic residue. Residues His-308 and Asp-319 each contribute to the Zn(2+) site.

It belongs to the peptidase M35 family. Zn(2+) is required as a cofactor.

It localises to the secreted. It carries out the reaction Preferential cleavage of bonds with hydrophobic residues in P1'. Also 3-Asn-|-Gln-4 and 8-Gly-|-Ser-9 bonds in insulin B chain.. In terms of biological role, secreted metalloproteinase that allows assimilation of proteinaceous substrates. Shows high activities on basic nuclear substrates such as histone and protamine. This Aspergillus oryzae (strain ATCC 42149 / RIB 40) (Yellow koji mold) protein is Neutral protease 2 homolog AO090001000135.